Reading from the N-terminus, the 95-residue chain is Large ribosomal subunit protein eL31 (95 aa).

It belongs to the eukaryotic ribosomal protein eL31 family. In terms of assembly, part of the 50S ribosomal subunit.

In Pyrococcus furiosus (strain ATCC 43587 / DSM 3638 / JCM 8422 / Vc1), this protein is Large ribosomal subunit protein eL31.